A 341-amino-acid polypeptide reads, in one-letter code: tRNA N6-adenosine threonylcarbamoyltransferase (341 aa).

Residues His-115 and His-119 each coordinate Fe cation. Substrate-binding positions include 137–141, Asp-170, Gly-183, Asp-187, and Asn-276; that span reads IVSGG. Asp-304 provides a ligand contact to Fe cation.

The protein belongs to the KAE1 / TsaD family. Fe(2+) is required as a cofactor.

The protein resides in the cytoplasm. It catalyses the reaction L-threonylcarbamoyladenylate + adenosine(37) in tRNA = N(6)-L-threonylcarbamoyladenosine(37) in tRNA + AMP + H(+). Functionally, required for the formation of a threonylcarbamoyl group on adenosine at position 37 (t(6)A37) in tRNAs that read codons beginning with adenine. Is involved in the transfer of the threonylcarbamoyl moiety of threonylcarbamoyl-AMP (TC-AMP) to the N6 group of A37, together with TsaE and TsaB. TsaD likely plays a direct catalytic role in this reaction. The protein is tRNA N6-adenosine threonylcarbamoyltransferase of Staphylococcus aureus (strain Mu3 / ATCC 700698).